The primary structure comprises 249 residues: Triosephosphate isomerase (249 aa).

Positions 12 and 14 each coordinate substrate. Lys14 bears the N6-acetyllysine mark. Tyr68 is subject to 3'-nitrotyrosine. Residue Ser80 is modified to Phosphoserine. His96 serves as the catalytic Electrophile. Ser106 bears the Phosphoserine mark. Residue Lys142 forms a Glycyl lysine isopeptide (Lys-Gly) (interchain with G-Cter in SUMO1) linkage. Position 149 is an N6-succinyllysine (Lys149). Residue Lys156 is modified to N6-acetyllysine; alternate. Lys156 bears the N6-succinyllysine; alternate mark. Glu166 acts as the Proton acceptor in catalysis. Thr173 is modified (phosphothreonine). Residue Lys194 is modified to N6-acetyllysine; alternate. The residue at position 194 (Lys194) is an N6-succinyllysine; alternate. Position 194 is an N6-methyllysine; alternate (Lys194). Residue Ser198 is modified to Phosphoserine. A 3'-nitrotyrosine modification is found at Tyr209. A Phosphoserine modification is found at Ser212. Position 214 is a phosphothreonine (Thr214). Position 223 is a phosphoserine (Ser223). Lys238 carries the post-translational modification N6-acetyllysine.

It belongs to the triosephosphate isomerase family. As to quaternary structure, homodimer.

The protein resides in the cytoplasm. The catalysed reaction is dihydroxyacetone phosphate = methylglyoxal + phosphate. It carries out the reaction D-glyceraldehyde 3-phosphate = dihydroxyacetone phosphate. Its pathway is carbohydrate degradation; glycolysis; D-glyceraldehyde 3-phosphate from glycerone phosphate: step 1/1. It participates in carbohydrate biosynthesis; gluconeogenesis. Its function is as follows. Triosephosphate isomerase is an extremely efficient metabolic enzyme that catalyzes the interconversion between dihydroxyacetone phosphate (DHAP) and D-glyceraldehyde-3-phosphate (G3P) in glycolysis and gluconeogenesis. Functionally, it is also responsible for the non-negligible production of methylglyoxal a reactive cytotoxic side-product that modifies and can alter proteins, DNA and lipids. This chain is Triosephosphate isomerase (Tpi1), found in Rattus norvegicus (Rat).